Reading from the N-terminus, the 367-residue chain is Phosphoribosylaminoimidazole-succinocarboxamide synthase (367 aa).

Belongs to the SAICAR synthetase family.

It catalyses the reaction 5-amino-1-(5-phospho-D-ribosyl)imidazole-4-carboxylate + L-aspartate + ATP = (2S)-2-[5-amino-1-(5-phospho-beta-D-ribosyl)imidazole-4-carboxamido]succinate + ADP + phosphate + 2 H(+). Its pathway is purine metabolism; IMP biosynthesis via de novo pathway; 5-amino-1-(5-phospho-D-ribosyl)imidazole-4-carboxamide from 5-amino-1-(5-phospho-D-ribosyl)imidazole-4-carboxylate: step 1/2. The protein is Phosphoribosylaminoimidazole-succinocarboxamide synthase of Aliivibrio fischeri (strain ATCC 700601 / ES114) (Vibrio fischeri).